A 606-amino-acid polypeptide reads, in one-letter code: DNA mismatch repair protein MutL (606 aa).

The tract at residues 348 to 378 (QPHAQRPQAPWSAETSPFRPYPPAAGFSERP) is disordered.

This sequence belongs to the DNA mismatch repair MutL/HexB family.

This protein is involved in the repair of mismatches in DNA. It is required for dam-dependent methyl-directed DNA mismatch repair. May act as a 'molecular matchmaker', a protein that promotes the formation of a stable complex between two or more DNA-binding proteins in an ATP-dependent manner without itself being part of a final effector complex. This chain is DNA mismatch repair protein MutL, found in Rhizobium etli (strain CIAT 652).